The following is a 507-amino-acid chain: Histidine ammonia-lyase (507 aa).

The 5-imidazolinone (Ser-Gly) cross-link spans 143–145; sequence SSG. At S144 the chain carries 2,3-didehydroalanine (Ser).

This sequence belongs to the PAL/histidase family. Contains an active site 4-methylidene-imidazol-5-one (MIO), which is formed autocatalytically by cyclization and dehydration of residues Ser-Ser-Gly.

The protein localises to the cytoplasm. The catalysed reaction is L-histidine = trans-urocanate + NH4(+). The protein operates within amino-acid degradation; L-histidine degradation into L-glutamate; N-formimidoyl-L-glutamate from L-histidine: step 1/3. The protein is Histidine ammonia-lyase of Alkaliphilus metalliredigens (strain QYMF).